Reading from the N-terminus, the 171-residue chain is uncharacterized protein (171 aa).

The segment at 139–171 is disordered; the sequence is ARKPTKSDDEEEEVGKMGGISSSINSWVQRQKL. Polar residues predominate over residues 158–171; it reads ISSSINSWVQRQKL.

This is an uncharacterized protein from Caenorhabditis elegans.